The chain runs to 550 residues: Probable methionine--tRNA ligase, cytoplasmic (550 aa).

The 'HIGH' region signature appears at 10–20; sequence PYVNNQPHLGN. Positions 328–332 match the 'KMSKS' region motif; sequence KFSKS. An ATP-binding site is contributed by Lys-331.

This sequence belongs to the class-I aminoacyl-tRNA synthetase family.

Its subcellular location is the cytoplasm. It catalyses the reaction tRNA(Met) + L-methionine + ATP = L-methionyl-tRNA(Met) + AMP + diphosphate. The chain is Probable methionine--tRNA ligase, cytoplasmic from Encephalitozoon cuniculi (strain GB-M1) (Microsporidian parasite).